Here is a 359-residue protein sequence, read N- to C-terminus: NAC domain-containing protein 45 (359 aa).

The NAC domain maps to 19-185 (LPPGFRFHPT…EWVVCKVFHK (167 aa)). A DNA-binding region spans residues 130–191 (VGMKKTLVFY…VFHKKGDDRE (62 aa)).

Expressed in roots. Expressed at low levels in leaves, stems and panicles.

It is found in the nucleus. In terms of biological role, transcription activator involved in responses to drought stress and salt stress. Transactivates the stress response genes LEA19 and PM19L. The sequence is that of NAC domain-containing protein 45 from Oryza sativa subsp. japonica (Rice).